The following is a 174-amino-acid chain: MTLILGIDPGSRITGFGVVRETARGCEYVASGCIRTGNGPLHERLQVVFRSVREVIRTHGPTTLSIEQVFMARNADSALKLGQARGAAIVAAMEEGLSVAEYTASQVKQAVVGTGGADKQQVQMMVMHLLKLTQKPQIDASDALAIALCHAHTQQSLVPHGLVGARRRGGRLRL.

Catalysis depends on residues Asp-8, Glu-67, and Asp-139. Asp-8, Glu-67, and Asp-139 together coordinate Mg(2+).

Belongs to the RuvC family. As to quaternary structure, homodimer which binds Holliday junction (HJ) DNA. The HJ becomes 2-fold symmetrical on binding to RuvC with unstacked arms; it has a different conformation from HJ DNA in complex with RuvA. In the full resolvosome a probable DNA-RuvA(4)-RuvB(12)-RuvC(2) complex forms which resolves the HJ. Requires Mg(2+) as cofactor.

Its subcellular location is the cytoplasm. The enzyme catalyses Endonucleolytic cleavage at a junction such as a reciprocal single-stranded crossover between two homologous DNA duplexes (Holliday junction).. The RuvA-RuvB-RuvC complex processes Holliday junction (HJ) DNA during genetic recombination and DNA repair. Endonuclease that resolves HJ intermediates. Cleaves cruciform DNA by making single-stranded nicks across the HJ at symmetrical positions within the homologous arms, yielding a 5'-phosphate and a 3'-hydroxyl group; requires a central core of homology in the junction. The consensus cleavage sequence is 5'-(A/T)TT(C/G)-3'. Cleavage occurs on the 3'-side of the TT dinucleotide at the point of strand exchange. HJ branch migration catalyzed by RuvA-RuvB allows RuvC to scan DNA until it finds its consensus sequence, where it cleaves and resolves the cruciform DNA. The polypeptide is Crossover junction endodeoxyribonuclease RuvC (Pseudomonas paraeruginosa (strain DSM 24068 / PA7) (Pseudomonas aeruginosa (strain PA7))).